The chain runs to 331 residues: L-lactate dehydrogenase A chain (331 aa).

NAD(+) is bound by residues 29 to 57 (GMVGMASAISILLKDLCDELAMVDVMEDK) and arginine 98. Arginine 105, asparagine 137, and arginine 168 together coordinate substrate. Asparagine 137 lines the NAD(+) pocket. Histidine 192 (proton acceptor) is an active-site residue. Threonine 247 is a substrate binding site.

Belongs to the LDH/MDH superfamily. LDH family. As to quaternary structure, homotetramer.

It is found in the cytoplasm. It carries out the reaction (S)-lactate + NAD(+) = pyruvate + NADH + H(+). It functions in the pathway fermentation; pyruvate fermentation to lactate; (S)-lactate from pyruvate: step 1/1. Functionally, interconverts simultaneously and stereospecifically pyruvate and lactate with concomitant interconversion of NADH and NAD(+). The sequence is that of L-lactate dehydrogenase A chain (ldha) from Gobionotothen gibberifrons (Humped rockcod).